Consider the following 1353-residue polypeptide: Ankyrin repeat domain-containing protein 36B (1353 aa).

ANK repeat units follow at residues 19–48, 52–81, 85–114, 118–147, 151–180, and 184–213; these read YHLK…DANK, KERT…ELNL, EDRT…DPNI, FGRT…NIEE, NEYQ…NVNA, and LGRS…DVFS. Disordered regions lie at residues 249 to 307 and 349 to 607; these read PINS…KDSV and MGGG…KATS. Polar residues predominate over residues 250-259; that stretch reads INSNPVSPQK. 2 stretches are compositionally biased toward basic and acidic residues: residues 260 to 272 and 295 to 306; these read QRAE…DKDS and PAEKATSDEKDS. 2 stretches are compositionally biased toward polar residues: residues 355–367 and 389–400; these read GTVS…ASKT and GTVSSQKQQALK. Basic and acidic residues-rich tracts occupy residues 436-455 and 471-491; these read TSDE…DGEI and SVKE…EKSR. The span at 579–600 shows a compositional bias: polar residues; the sequence is VSNIPTEIKDGQQSGTVSSQKQ. Coiled-coil stretches lie at residues 731–762, 821–908, 937–1055, and 1119–1344; these read AEQD…QIHS, IKLK…YRIE, SETD…DHDQ, and VFEH…LQHS.

This sequence belongs to the ANKRD36 family.

The chain is Ankyrin repeat domain-containing protein 36B (ANKRD36B) from Homo sapiens (Human).